The chain runs to 382 residues: Sphingoid long-chain base transporter RSB1 (382 aa).

At 1–34 (MSNATNNTLGSLLPQLEAAANSNSLYGGMVPNLR) the chain is on the extracellular side. Asparagine 3 and asparagine 6 each carry an N-linked (GlcNAc...) asparagine glycan. Residues 35-55 (FNITMIVIWGILLTIHVVQLL) form a helical membrane-spanning segment. Over 56–57 (MR) the chain is Cytoplasmic. A helical membrane pass occupies residues 58–78 (QYWFSIAFICTGILEVLGFIG). The Extracellular segment spans residues 79 to 90 (RTWSHSNVADMD). A helical membrane pass occupies residues 91–111 (AFLLNMICLTIAPVFTMGGIY). Topologically, residues 112–135 (YQLAKLIEVYGHRFSLLPSPMAYS) are cytoplasmic. Residues 136–156 (FIFICSDIVSLVVQAVGGGLC) traverse the membrane as a helical segment. At 157–171 (GVAVTDGTSTTTGNH) the chain is on the extracellular side. The chain crosses the membrane as a helical span at residues 172 to 192 (VFIAGLAIQVASMAIFLMLWF). At 193–241 (HFLFRIYISVRWEHINSRPISLSLLKISQTEVDYLYREKFHFLRLEPKR) the chain is on the cytoplasmic side. The chain crosses the membrane as a helical span at residues 242 to 262 (WVFHYFNLAMTVAVLTIFTRC). At 263–281 (CYRLAELVVGWDGYLITHE) the chain is on the extracellular side. Residues 282–302 (WYFIILDALMMAIATVTLTIF) form a helical membrane-spanning segment. Topologically, residues 303 to 382 (HPGFAFKGRS…LFSSKKKAKL (80 aa)) are cytoplasmic.

It belongs to the lipid-translocating exporter (LTE) (TC 9.A.26.1) family.

Its subcellular location is the cell membrane. Catalyzes the ATP-dependent translocation of sphingoid long-chain bases (LCBs) from the cytoplasmic site toward the extracytoplasmic side of the membrane (flip-flop). Involved in the establishment of the functional lipid asymmetry of the plasma membrane. Regulates intracellular levels of LCBs, sphingolipid precursors that are growth inhibitory at increased levels. The sequence is that of Sphingoid long-chain base transporter RSB1 (RSB1) from Saccharomyces cerevisiae (strain AWRI1631) (Baker's yeast).